Here is a 442-residue protein sequence, read N- to C-terminus: Thymidine phosphorylase (442 aa).

This sequence belongs to the thymidine/pyrimidine-nucleoside phosphorylase family. As to quaternary structure, homodimer.

The enzyme catalyses thymidine + phosphate = 2-deoxy-alpha-D-ribose 1-phosphate + thymine. It functions in the pathway pyrimidine metabolism; dTMP biosynthesis via salvage pathway; dTMP from thymine: step 1/2. The enzymes which catalyze the reversible phosphorolysis of pyrimidine nucleosides are involved in the degradation of these compounds and in their utilization as carbon and energy sources, or in the rescue of pyrimidine bases for nucleotide synthesis. This is Thymidine phosphorylase from Vibrio vulnificus (strain CMCP6).